The chain runs to 325 residues: Reaction center protein M chain (325 aa).

A run of 3 helical transmembrane segments spans residues 54–80 (LGPL…LASV), 111–140 (NDGG…RARA), and 143–168 (MGTH…RPVL). The (7R,8Z)-bacteriochlorophyll b site is built by H183 and H203. Residues 198–226 (FYNPFHALSIAFLYGATLLFAMHGATILA) form a helical membrane-spanning segment. Fe cation-binding residues include H220 and E235. An a ubiquinone-binding site is contributed by W253. The chain crosses the membrane as a helical span at residues 260–286 (NATTESIHRWAWWFAVLCPLCGGIGIL). H267 contacts Fe cation.

The protein belongs to the reaction center PufL/M/PsbA/D family. Reaction center is composed of four bacteriochlorophylls, two bacteriopheophytins, two ubiquinones, one iron, and three highly hydrophobic polypeptide chains (designated L, M, and H).

The protein localises to the cell inner membrane. In terms of biological role, the reaction center is a membrane-bound complex that mediates the initial photochemical event in the electron transfer process of photosynthesis. This is Reaction center protein M chain (pufM) from Rubrivivax gelatinosus (strain NBRC 100245 / IL144).